A 359-amino-acid polypeptide reads, in one-letter code: Pyruvate dehydrogenase E1 component subunit beta, mitochondrial (359 aa).

The N-terminal 30 residues, 1 to 30 (MAAVSGLVRRPLREVSRLLKRRFHWTAPAA), are a transit peptide targeting the mitochondrion. Tyr67 bears the Phosphotyrosine mark. Glu89 serves as a coordination point for thiamine diphosphate. 5 residues coordinate K(+): Ile142, Ala190, Ile191, Asp193, and Asn195. Lys354 is subject to N6-acetyllysine.

In terms of assembly, heterotetramer of two PDHA1 and two PDHB subunits. The heterotetramer interacts with DLAT, and is part of the multimeric pyruvate dehydrogenase complex that contains multiple copies of pyruvate dehydrogenase (E1), dihydrolipoamide acetyltransferase (DLAT, E2) and lipoamide dehydrogenase (DLD, E3). These subunits are bound to an inner core composed of about 48 DLAT and 12 PDHX molecules. Interacts with DLAT. It depends on thiamine diphosphate as a cofactor.

It is found in the mitochondrion matrix. It carries out the reaction N(6)-[(R)-lipoyl]-L-lysyl-[protein] + pyruvate + H(+) = N(6)-[(R)-S(8)-acetyldihydrolipoyl]-L-lysyl-[protein] + CO2. Its function is as follows. The pyruvate dehydrogenase complex catalyzes the overall conversion of pyruvate to acetyl-CoA and CO(2), and thereby links the glycolytic pathway to the tricarboxylic cycle. This is Pyruvate dehydrogenase E1 component subunit beta, mitochondrial (PDHB) from Pongo abelii (Sumatran orangutan).